We begin with the raw amino-acid sequence, 710 residues long: Low-temperature-induced 78 kDa protein (710 aa).

Disordered stretches follow at residues 1–198, 225–269, and 305–507; these read MDQT…LDGQ, YQSK…RDLS, and GFGD…STYT. Residues 14 to 25 are compositionally biased toward basic and acidic residues; the sequence is QHPEEVEHHENG. Positions 29–41 are enriched in basic residues; it reads MFRKVKARAKKFK. A compositionally biased stretch (basic and acidic residues) spans 49–58; sequence QSNEHEQDHD. The segment covering 59-73 has biased composition (acidic residues); sequence LVEEDDDDDELEPEV. A compositionally biased stretch (basic and acidic residues) spans 138–168; the sequence is SDKEEKRDVPIHHPLSELSDREESRETHHES. The segment covering 169 to 187 has biased composition (polar residues); that stretch reads LNTPVSLLSGTEDVTSTFA. A run of 5 repeats spans residues 303-316, 317-331, 336-350, 357-370, and 398-412. Residues 303 to 370 are 2 X 14 AA repeats of P-[MV]-G-F-G-[DS]-E-S-G-A-E-L-E-K; that stretch reads PVGFGDESGA…GSESGAELEK (68 aa). Basic and acidic residues-rich tracts occupy residues 313-331, 340-352, 367-380, 402-418, 442-466, and 475-487; these read ELEKDFPTRSHDFDMKTET, RSHEFDLKTESGN, ELEKEFDQKNDSGR, RSHELDLKNESDIDKDV, EDKFPARSDDVEVETELGRDPKTET, and SHPKERDEFKESR. Residues 317-412 are 3 X 15 AA repeats of [DN]-[FS]-P-[STV]-R-S-H-[DE]-[FL]-D-[LM]-K-[NT]-E-[ST]; sequence DFPTRSHDFD…SHELDLKNES (96 aa). 3 repeat units span residues 510-514, 532-536, and 550-554. The segment at 510–600 is 5 X 5 AA repeats of [FV]-[ADT]-[EST]-[KM]-L; the sequence is FASMLGYSGE…AFSDMVAEKL (91 aa). A disordered region spans residues 537–577; that stretch reads TPVNEKDQETESAVTTKLPISGGGSGVEEQRGEDKSVSGRD. Over residues 564-577 the composition is skewed to basic and acidic residues; the sequence is EEQRGEDKSVSGRD. Tandem repeats lie at residues 579–583 and 596–600. Residues 601-710 form a disordered region; sequence QIGGEEEKKE…STVVPVQKEL (110 aa). Positions 605 to 626 are enriched in basic and acidic residues; the sequence is EEEKKETTTKEVEKISTEKAAS. S626 carries the post-translational modification Phosphoserine. Residues 638–654 are compositionally biased toward gly residues; that stretch reads GGGGMVGRIKGWFGGGA. 2 consecutive repeat copies span residues 648–670 and 674–696. A 2 X 23 AA repeats region spans residues 648-696; the sequence is GWFGGGATDEVKPESPHSVEEAPKSSGWFGGGATEEVKPKSPHSVEESP. Basic and acidic residues-rich tracts occupy residues 656 to 670 and 682 to 693; these read DEVKPESPHSVEEAP and EEVKPKSPHSVE.

This sequence belongs to the LTI78/LTI65 family. In terms of tissue distribution, accumulates rapidly in leaves, stems, roots, flower petals, filaments, and sepals during cold-acclimation.

It localises to the cytoplasm. Involved in responses to abiotic stresses. Regulates probably root elongation in cold conditions. The protein is Low-temperature-induced 78 kDa protein of Arabidopsis thaliana (Mouse-ear cress).